We begin with the raw amino-acid sequence, 290 residues long: GTPase Era (290 aa).

Residues K2–E169 form the Era-type G domain. Residues G10–S17 form a G1 region. G10–S17 is a GTP binding site. Positions Q36–N40 are G2. The G3 stretch occupies residues D57 to G60. Residues D57 to F61 and N119 to D122 contribute to the GTP site. Positions N119–D122 are G4. Positions I148 to A150 are G5. The 77-residue stretch at L200–K276 folds into the KH type-2 domain.

This sequence belongs to the TRAFAC class TrmE-Era-EngA-EngB-Septin-like GTPase superfamily. Era GTPase family. In terms of assembly, monomer.

Its subcellular location is the cytoplasm. It is found in the cell inner membrane. Functionally, an essential GTPase that binds both GDP and GTP, with rapid nucleotide exchange. Plays a role in 16S rRNA processing and 30S ribosomal subunit biogenesis and possibly also in cell cycle regulation and energy metabolism. The sequence is that of GTPase Era from Borreliella burgdorferi (strain ATCC 35210 / DSM 4680 / CIP 102532 / B31) (Borrelia burgdorferi).